A 497-amino-acid chain; its full sequence is MGTLHHLINGEMVADNGRSADVFNPSTGEAIHKVPLADGKTLQKAIDAARAAFPAWRNTPPAKRAQVLYRFKQLLEQNEARISKLISEEHGKTLEDAAGELKRGIENVEYACAAPEILKGEYSRNVGPNIDAWSDFQPIGVVAGITPFNFPAMVPLWMYPLAIACGNTFILKPSERDPSSTLLIAELFHEAGLPKGVLNVVHGDKEAVDGLLQAPEVKAISFVGSTPIAEYIYAEGTKRGKRVQALGGAKNHAVLMPDADLDNAVSALMGAAYGSCGERCMAISVAVCVGDQVADALIAKLVPQIKALKIGAGTSCGLDMGPLVTAAAQAKVTGYIDSGVAQGAELVVDGRGYQVAGHENGFFLGGSLFDRVTPEMTIYKEEIFGPVLCVVRVNSLEEAMQLINDHEYGNGTCIFTRDGEAARLFCDEIEVGMVGVNVPLPVPVAYHSFGGWKRSLFGDLHAYGPDGVRFYTRRKAITQRWPQRASHEASQFAFPSL.

Positions 148, 172, 175, 176, and 225 each coordinate NAD(+). The active-site Nucleophile is the cysteine 280. Glutamate 382 contacts NAD(+).

This sequence belongs to the aldehyde dehydrogenase family.

The catalysed reaction is 3-oxopropanoate + NAD(+) + CoA + H2O = hydrogencarbonate + acetyl-CoA + NADH + H(+). In terms of biological role, involved in the degradation of beta-alanine. Likely catalyzes the NAD(+)- and CoA-dependent oxidative decarboxylation of malonate semialdehyde (3-oxopropanoate) to acetyl-CoA. This chain is Malonate-semialdehyde dehydrogenase, found in Pseudomonas aeruginosa (strain ATCC 15692 / DSM 22644 / CIP 104116 / JCM 14847 / LMG 12228 / 1C / PRS 101 / PAO1).